Consider the following 509-residue polypeptide: MDVEQKKPLIESSDRNLPDFKKSVKLKYVKLGYHYLITHGMYLFLSPLVLVIAAQISTFSVTDLRSLWEHLQYNLISVVVCSMLLVFLMTIYFMTRPRPVYLVNFSCFKPDESRKCTKKIFMDRSKLTGSFTEENLEFQRKILQRSGLGESTYLPEAVLNVPPNPCMKEARKEAETVMFGAIDELLAKTNVNPKDIGILIVNCSLFNPTPSLSAMVVNHYKLRGNILSYNLGGMGCSAGLISIDLAKHLLHSIPNTYAMVISMENITLNWYFGNDRSKLVSNCLFRMGGAAILLSNKRWDRRRSKYELVDTVRTHKGADDKCFGCITQEEDSASKIGVTLSKELMAVAGDALKTNITTLGPLVLPTSEQLLFFATLVGRKLFKMKIKPYIPDFKLAFEHFCIHAGGRAVLDELEKNLKLTEWHMEPSRMTLYRFGNTSSSSLWYELAYSEAKGRIKKGDRIWQIAFGSGFKCNSSVWRAVRSVNPKKEKNPWMDEIHEFPVEVPKVSTI.

2 helical membrane passes run 36 to 56 and 75 to 95; these read LITH…AAQI and LISV…YFMT. An FAE domain is found at 92–381; sequence YFMTRPRPVY…FFATLVGRKL (290 aa). Catalysis depends on residues C236, H315, H399, H403, and N436.

The protein belongs to the thiolase-like superfamily. Chalcone/stilbene synthases family. In terms of tissue distribution, only expressed in guard cells. Expressed in siliques, flowers, leaves, stems, roots and seedlings.

It is found in the membrane. It catalyses the reaction a very-long-chain acyl-CoA + malonyl-CoA + H(+) = a very-long-chain 3-oxoacyl-CoA + CO2 + CoA. Its pathway is lipid metabolism; fatty acid biosynthesis. Active on both saturated and mono-unsaturated acyl chains C16 to C20. The protein is 3-ketoacyl-CoA synthase 11 of Arabidopsis thaliana (Mouse-ear cress).